The chain runs to 164 residues: Histone H1 (164 aa).

Over residues 1-10 (MAPRSSTSKS) the composition is skewed to polar residues. The interval 1-164 (MAPRSSTSKS…KKSSKPAKKN (164 aa)) is disordered. Residues 16 to 27 (KDHKKAPIKKAI) are compositionally biased toward basic residues. Phosphothreonine occurs at positions 47 and 54. Composition is skewed to basic and acidic residues over residues 49–61 (VKKD…ADTK), 69–89 (TMKE…GDKK), and 117–156 (TKKE…DAKK).

Post-translationally, cell-growth/division-associated phosphorylation by a CDC2-like kinase.

It localises to the nucleus. It is found in the chromosome. In terms of biological role, histones H1 are necessary for the condensation of nucleosome chains into higher-order structures. This is Histone H1 (HHO) from Tetrahymena thermophila (strain SB210).